Consider the following 517-residue polypeptide: Crotonobetaine/carnitine--CoA ligase (517 aa).

It belongs to the ATP-dependent AMP-binding enzyme family.

It catalyses the reaction 4-(trimethylamino)butanoate + ATP + CoA = 4-(trimethylamino)butanoyl-CoA + AMP + diphosphate. The catalysed reaction is crotonobetaine + ATP + CoA = crotonobetainyl-CoA + AMP + diphosphate. The enzyme catalyses (R)-carnitine + ATP + CoA = (R)-carnitinyl-CoA + AMP + diphosphate. Its pathway is amine and polyamine metabolism; carnitine metabolism. In terms of biological role, catalyzes the transfer of CoA to carnitine, generating the initial carnitinyl-CoA needed for the CaiB reaction cycle. Also has activity toward crotonobetaine and gamma-butyrobetaine. In Escherichia coli O7:K1 (strain IAI39 / ExPEC), this protein is Crotonobetaine/carnitine--CoA ligase.